The following is a 321-amino-acid chain: Sideroflexin-1-3 (321 aa).

The next 5 membrane-spanning stretches (helical) occupy residues 101 to 121 (IITG…FWQW), 146 to 168 (LVTS…NHAV), 174 to 194 (LLGR…NIPC), 220 to 240 (AAVV…IPGM), and 266 to 286 (IQTL…CAFF).

Belongs to the sideroflexin family.

The protein localises to the mitochondrion membrane. Mitochondrial amino-acid transporter that mediates transport of serine into mitochondria. This is Sideroflexin-1-3 from Drosophila melanogaster (Fruit fly).